We begin with the raw amino-acid sequence, 66 residues long: Sarcoplasmic/endoplasmic reticulum calcium ATPase regulator ARLN (66 aa).

An N-acetylmethionine modification is found at M1. The interval 1–37 (MEVDAPGVDGRDGLRERRGFSEGGRQNFDVRPQSGAN) is disordered. The segment covering 9 to 20 (DGRDGLRERRGF) has biased composition (basic and acidic residues). The chain crosses the membrane as a helical span at residues 45 to 65 (WLDLWLFILFDVVVFLFVYFL).

As to quaternary structure, homooligomer. Can also form heterooligomers with other sarcoplasmic/endoplasmic reticulum calcium ATPase (SERCA) regulators ERLN, PLN, SLN and STRIT1/DWORF. Monomer. Interacts as a monomer with ATP2A2/SERCA2; the interaction results in inhibition of ATP2A2 Ca(2+) affinity.

It is found in the endoplasmic reticulum membrane. In terms of biological role, inhibits the activity of the calcium ATPases ATP2A2/SERCA2 and ATP2A3/SERCA3 by decreasing their apparent affinity for Ca(2+). The protein is Sarcoplasmic/endoplasmic reticulum calcium ATPase regulator ARLN of Homo sapiens (Human).